The following is a 220-amino-acid chain: Putative F-box protein At3g20705 (220 aa).

The F-box domain occupies methionine 1–isoleucine 51.

The protein is Putative F-box protein At3g20705 of Arabidopsis thaliana (Mouse-ear cress).